Here is a 37-residue protein sequence, read N- to C-terminus: MKIRASIRKICEKCRLICRRRRIIVICSNPRHKQRQG.

The protein belongs to the bacterial ribosomal protein bL36 family.

Its subcellular location is the plastid. The sequence is that of Large ribosomal subunit protein bL36c (rpl36) from Epifagus virginiana (Beechdrops).